The following is a 363-amino-acid chain: Ribonuclease P protein subunit p40 (363 aa).

Component of nuclear RNase P and RNase MRP ribonucleoproteins. RNase P consists of a catalytic RNA moiety and about 10 protein subunits; POP1, POP4, POP5, POP7, RPP14, RPP21, RPP25, RPP30, RPP38 and RPP40. Within the RNase P complex, POP1, POP7 and RPP25 form the 'finger' subcomplex, POP5, RPP14, RPP40 and homodimeric RPP30 form the 'palm' subcomplex, and RPP21, POP4 and RPP38 form the 'wrist' subcomplex. All subunits of the RNase P complex interact with the catalytic RNA. Several subunits of RNase P are also part of the RNase MRP complex. RNase MRP consists of a catalytic RNA moiety and about 8 protein subunits; POP1, POP7, RPP25, RPP30, RPP38, RPP40 and possibly also POP4 and POP5.

The protein resides in the nucleus. The protein localises to the nucleolus. Its function is as follows. Component of ribonuclease P, a ribonucleoprotein complex that generates mature tRNA molecules by cleaving their 5'-ends. Also a component of the MRP ribonuclease complex, which cleaves pre-rRNA sequences. The protein is Ribonuclease P protein subunit p40 (Rpp40) of Rattus norvegicus (Rat).